The following is a 363-amino-acid chain: D(1) dopamine receptor (363 aa).

Topologically, residues 1–24 (MAVLDLNLTTVIDSGFMESDRSVR) are extracellular. N-linked (GlcNAc...) asparagine glycosylation occurs at Asn7. A helical membrane pass occupies residues 25–45 (VLTGCFLSVLILSTLLGNTLV). The Cytoplasmic segment spans residues 46–61 (CAAVTKFRHLRSKVTN). Residues 62–81 (FFVISLAVSDLLVAVLVMPW) form a helical membrane-spanning segment. Over 82–98 (KAVTEVAGFWPFGAFCD) the chain is Extracellular. A disulfide bridge connects residues Cys97 and Cys187. The helical transmembrane segment at 99 to 120 (IWVAFDIMCSTASILNLCVISV) threads the bilayer. The Cytoplasmic portion of the chain corresponds to 121-139 (DRYWAISSPFRYERKMTPR). Residues 140–164 (VAFVMISGAWTLSVLISFIPVQLKW) traverse the membrane as a helical segment. The Extracellular segment spans residues 165–194 (HKAQPIGFLEVNASRRDLPTDNCDSSLNRT). A helical membrane pass occupies residues 195-219 (YAISSSLISFYIPVAIMIVTYTQIY). Residues 220–271 (RIAQKQIRRISALERAAESAQIRHDSMGSGSNMDLESSFKLSFKRETKVLKT) are Cytoplasmic-facing. The chain crosses the membrane as a helical span at residues 272–297 (LSVIMGVFVCCWLPFFILNCMVPFCK). The Extracellular portion of the chain corresponds to 298 to 310 (RTSNGLPCISPTT). Residues 311–330 (FDVFVWFGWANSSLNPIIYA) form a helical membrane-spanning segment. At 331–363 (FNADFRRAFAILLGCQRLCPGSISMETPSLNKN) the chain is on the cytoplasmic side. The S-palmitoyl cysteine moiety is linked to residue Cys345.

The protein belongs to the G-protein coupled receptor 1 family. As to expression, retina.

It localises to the cell membrane. Its subcellular location is the cell projection. The protein localises to the cilium membrane. Functionally, dopamine receptor whose activity is mediated by G proteins which activate adenylyl cyclase. Could be involved in growth hormone release. The chain is D(1) dopamine receptor from Carassius auratus (Goldfish).